Consider the following 407-residue polypeptide: UDP-N-acetylglucosamine--N-acetylmuramyl-(pentapeptide) pyrophosphoryl-undecaprenol N-acetylglucosamine transferase (407 aa).

The segment at 1–21 (MNNSVREPTRGRRGSPPVADA) is disordered. UDP-N-acetyl-alpha-D-glucosamine-binding positions include 38 to 40 (TAG), N157, S228, and Q324.

Belongs to the glycosyltransferase 28 family. MurG subfamily.

Its subcellular location is the cell membrane. The catalysed reaction is di-trans,octa-cis-undecaprenyl diphospho-N-acetyl-alpha-D-muramoyl-L-alanyl-D-glutamyl-meso-2,6-diaminopimeloyl-D-alanyl-D-alanine + UDP-N-acetyl-alpha-D-glucosamine = di-trans,octa-cis-undecaprenyl diphospho-[N-acetyl-alpha-D-glucosaminyl-(1-&gt;4)]-N-acetyl-alpha-D-muramoyl-L-alanyl-D-glutamyl-meso-2,6-diaminopimeloyl-D-alanyl-D-alanine + UDP + H(+). The protein operates within cell wall biogenesis; peptidoglycan biosynthesis. Cell wall formation. Catalyzes the transfer of a GlcNAc subunit on undecaprenyl-pyrophosphoryl-MurNAc-pentapeptide (lipid intermediate I) to form undecaprenyl-pyrophosphoryl-MurNAc-(pentapeptide)GlcNAc (lipid intermediate II). This chain is UDP-N-acetylglucosamine--N-acetylmuramyl-(pentapeptide) pyrophosphoryl-undecaprenol N-acetylglucosamine transferase, found in Mycobacterium leprae (strain TN).